The sequence spans 204 residues: NAD(P)H dehydrogenase (quinone) (204 aa).

The 192-residue stretch at Ile4–Val195 folds into the Flavodoxin-like domain. FMN contacts are provided by residues Ser10–Ile15 and Thr83–Phe85. Position 12 (Tyr12) interacts with NAD(+). Trp103 contributes to the substrate binding site. Residues Ser118–Gly124 and His139 each bind FMN.

It belongs to the WrbA family. Requires FMN as cofactor.

It carries out the reaction a quinone + NADH + H(+) = a quinol + NAD(+). It catalyses the reaction a quinone + NADPH + H(+) = a quinol + NADP(+). The polypeptide is NAD(P)H dehydrogenase (quinone) (Trichlorobacter lovleyi (strain ATCC BAA-1151 / DSM 17278 / SZ) (Geobacter lovleyi)).